Reading from the N-terminus, the 76-residue chain is DNA-directed RNA polymerase subunit epsilon (76 aa).

The protein belongs to the RNA polymerase subunit epsilon family. In terms of assembly, RNAP is composed of a core of 2 alpha, a beta and a beta' subunit. The core is associated with a delta subunit, and at least one of epsilon or omega. When a sigma factor is associated with the core the holoenzyme is formed, which can initiate transcription.

The enzyme catalyses RNA(n) + a ribonucleoside 5'-triphosphate = RNA(n+1) + diphosphate. A non-essential component of RNA polymerase (RNAP). This Streptococcus thermophilus (strain CNRZ 1066) protein is DNA-directed RNA polymerase subunit epsilon.